We begin with the raw amino-acid sequence, 87 residues long: Putative membrane protein insertion efficiency factor (87 aa).

The protein belongs to the UPF0161 family.

The protein resides in the cell membrane. Functionally, could be involved in insertion of integral membrane proteins into the membrane. This Streptococcus pyogenes serotype M12 (strain MGAS2096) protein is Putative membrane protein insertion efficiency factor.